Here is a 128-residue protein sequence, read N- to C-terminus: Arginine decarboxylase proenzyme (128 aa).

S76 acts as the Schiff-base intermediate with substrate; via pyruvic acid in catalysis. Position 76 is a pyruvic acid (Ser); by autocatalysis (S76). H81 serves as the catalytic Proton acceptor; for processing activity. The active-site Proton donor; for catalytic activity is the C96.

It belongs to the prokaryotic AdoMetDC family. Type 1 subfamily. As to quaternary structure, heterooctamer of four alpha and four beta chains arranged as a tetramer of alpha/beta heterodimers. It depends on pyruvate as a cofactor. In terms of processing, is synthesized initially as an inactive proenzyme. Formation of the active enzyme involves a self-maturation process in which the active site pyruvoyl group is generated from an internal serine residue via an autocatalytic post-translational modification. Two non-identical subunits are generated from the proenzyme in this reaction, and the pyruvate is formed at the N-terminus of the alpha chain, which is derived from the carboxyl end of the proenzyme. The post-translation cleavage follows an unusual pathway, termed non-hydrolytic serinolysis, in which the side chain hydroxyl group of the serine supplies its oxygen atom to form the C-terminus of the beta chain, while the remainder of the serine residue undergoes an oxidative deamination to produce ammonia and the pyruvoyl group blocking the N-terminus of the alpha chain.

The enzyme catalyses L-arginine + H(+) = agmatine + CO2. It participates in amine and polyamine biosynthesis; agmatine biosynthesis; agmatine from L-arginine: step 1/1. Specifically catalyzes the decarboxylation of L-arginine to agmatine. Has no S-adenosylmethionine decarboxylase (AdoMetDC) activity. This is Arginine decarboxylase proenzyme from Metallosphaera sedula (strain ATCC 51363 / DSM 5348 / JCM 9185 / NBRC 15509 / TH2).